The sequence spans 387 residues: 3-ketoacyl-CoA thiolase (387 aa).

Cys91 serves as the catalytic Acyl-thioester intermediate. Catalysis depends on proton acceptor residues His343 and Cys373.

The protein belongs to the thiolase-like superfamily. Thiolase family. Heterotetramer of two alpha chains (FadB) and two beta chains (FadA).

The protein resides in the cytoplasm. It carries out the reaction an acyl-CoA + acetyl-CoA = a 3-oxoacyl-CoA + CoA. It participates in lipid metabolism; fatty acid beta-oxidation. In terms of biological role, catalyzes the final step of fatty acid oxidation in which acetyl-CoA is released and the CoA ester of a fatty acid two carbons shorter is formed. This is 3-ketoacyl-CoA thiolase from Erwinia tasmaniensis (strain DSM 17950 / CFBP 7177 / CIP 109463 / NCPPB 4357 / Et1/99).